The chain runs to 953 residues: TPR repeat-containing protein ZIP4 (953 aa).

The stretch at Ala129–Ala162 is one TPR 1 repeat. Positions Ala248–Pro269 are disordered. 2 TPR repeats span residues His432–Asp465 and Ala473–Ile506. The interval Val925–Val953 is disordered. Residues Ile943–Val953 show a composition bias toward polar residues.

Interacts with HEI10 and SHOC1.

The protein localises to the nucleus. Its subcellular location is the chromosome. In terms of biological role, required for crossover formation, complete synapsis of homologous chromosomes and bivalent formation during meiosis. Is specific to recombination events resulting in interference-sensitive crossovers (class I meiotic crossover) and works cooperatively with MER3 to promote crossovers. The polypeptide is TPR repeat-containing protein ZIP4 (Oryza sativa subsp. japonica (Rice)).